Reading from the N-terminus, the 121-residue chain is UPF0091 protein PH1428 (121 aa).

It belongs to the UPF0091 family.

The sequence is that of UPF0091 protein PH1428 from Pyrococcus horikoshii (strain ATCC 700860 / DSM 12428 / JCM 9974 / NBRC 100139 / OT-3).